The primary structure comprises 306 residues: Mitochondrial glycine transporter (306 aa).

Solcar repeat units follow at residues 25 to 114 (QPVI…LKQY), 121 to 205 (PTAL…TKNV), and 217 to 301 (LVPV…MMAK). A run of 6 helical transmembrane segments spans residues 31–56 (FLCG…TRLQ), 89–115 (GMSP…KQYF), 127–152 (VILG…TRYE), 180–203 (GLTA…SQTK), 221–247 (VNFS…KTHM), and 276–294 (GSVP…AWTV).

This sequence belongs to the mitochondrial carrier (TC 2.A.29) family. SLC25A38 subfamily.

The protein resides in the mitochondrion inner membrane. The catalysed reaction is glycine(in) = glycine(out). In terms of biological role, mitochondrial glycine transporter that imports glycine into the mitochondrial matrix. Plays an important role in providing glycine for the first enzymatic step in heme biosynthesis, the condensation of glycine with succinyl-CoA to produce 5-aminolevulinate (ALA) in the mitochondrial matrix. Required during erythropoiesis. Functionally, plays a role as pro-apoptotic protein that induces caspase-dependent apoptosis. This chain is Mitochondrial glycine transporter, found in Ovis aries (Sheep).